Reading from the N-terminus, the 1304-residue chain is Probable inactive serine/threonine-protein kinase fnkC (1304 aa).

Residues 33 to 402 (FEIIRILKKD…TNLLLTHKFI (370 aa)) form the Protein kinase domain. Residues 39 to 47 (LKKDEFSTT) and lysine 68 each bind ATP. Residues 208–277 (KDNNNNNNNN…EAEGGGGGGE (70 aa)) are disordered. The span at 210–269 (NNNNNNNNNNNNNNNNNNNNNNNNNNNNNNANNSNNNTLNNLSIVNNNSSSSSNDNSSEA) shows a compositional bias: low complexity. FNIP repeat units follow at residues 514–556 (HSKS…LGSD), 710–753 (FNQL…FGRC), 754–797 (FNQP…FGSQ), 798–841 (YNQP…FGES), and 900–943 (YNDI…FGCD). MATH domains lie at 1025-1154 (QGSW…RIDA) and 1172-1291 (NQAF…NVSI).

It belongs to the protein kinase superfamily. STE Ser/Thr protein kinase family.

The protein is Probable inactive serine/threonine-protein kinase fnkC (fnkC) of Dictyostelium discoideum (Social amoeba).